Consider the following 259-residue polypeptide: Small ribosomal subunit protein uS2 (259 aa).

The protein belongs to the universal ribosomal protein uS2 family.

This Streptococcus pneumoniae (strain CGSP14) protein is Small ribosomal subunit protein uS2.